Reading from the N-terminus, the 178-residue chain is ATP synthase subunit delta (178 aa).

It belongs to the ATPase delta chain family. F-type ATPases have 2 components, F(1) - the catalytic core - and F(0) - the membrane proton channel. F(1) has five subunits: alpha(3), beta(3), gamma(1), delta(1), epsilon(1). F(0) has three main subunits: a(1), b(2) and c(10-14). The alpha and beta chains form an alternating ring which encloses part of the gamma chain. F(1) is attached to F(0) by a central stalk formed by the gamma and epsilon chains, while a peripheral stalk is formed by the delta and b chains.

Its subcellular location is the cell inner membrane. F(1)F(0) ATP synthase produces ATP from ADP in the presence of a proton or sodium gradient. F-type ATPases consist of two structural domains, F(1) containing the extramembraneous catalytic core and F(0) containing the membrane proton channel, linked together by a central stalk and a peripheral stalk. During catalysis, ATP synthesis in the catalytic domain of F(1) is coupled via a rotary mechanism of the central stalk subunits to proton translocation. In terms of biological role, this protein is part of the stalk that links CF(0) to CF(1). It either transmits conformational changes from CF(0) to CF(1) or is implicated in proton conduction. The chain is ATP synthase subunit delta from Stutzerimonas stutzeri (strain A1501) (Pseudomonas stutzeri).